The primary structure comprises 469 residues: Zinc finger CCCH domain-containing protein 30 (469 aa).

The segment at valine 415–serine 443 adopts a C3H1-type zinc-finger fold. Positions alanine 444 to asparagine 469 are disordered. A compositionally biased stretch (basic residues) spans aspartate 449–arginine 458.

This chain is Zinc finger CCCH domain-containing protein 30, found in Oryza sativa subsp. japonica (Rice).